The following is a 562-amino-acid chain: Potassium-transporting ATPase potassium-binding subunit (562 aa).

Transmembrane regions (helical) follow at residues 5–25 (AFLLIFGLLLTVLIVAQPLGS), 63–83 (AAAILTLNLIGIVVLFVLLMA), 132–152 (GLTVQNFLAAASGIAVAFALI), 175–195 (LYVLLPLSLLLALFFVSQGVL), 250–270 (LSNIVQMLAILLIPTALCFAF), 279–299 (QGHALLWAMGLIFIVAAAVVM), 327–347 (FGVLTSSLYAVVTTATSTGAV), 356–376 (ALGGMVPMWLMQIGEVVFGGV), 379–399 (GLYGMLLFVLLTVFIAGLMIG), 416–436 (MTALAILIPPALVLLGTALAL), 483–503 (VLLAVAMLLGRFAVMVPVLAI), and 526–546 (LFIGMLIAIVLLIGALTFIPA).

This sequence belongs to the KdpA family. As to quaternary structure, the system is composed of three essential subunits: KdpA, KdpB and KdpC.

The protein resides in the cell inner membrane. Its function is as follows. Part of the high-affinity ATP-driven potassium transport (or Kdp) system, which catalyzes the hydrolysis of ATP coupled with the electrogenic transport of potassium into the cytoplasm. This subunit binds the periplasmic potassium ions and delivers the ions to the membrane domain of KdpB through an intramembrane tunnel. This is Potassium-transporting ATPase potassium-binding subunit from Pectobacterium carotovorum subsp. carotovorum (strain PC1).